Consider the following 165-residue polypeptide: Small ribosomal subunit protein eS10 (165 aa).

The tract at residues 92–165 (ATLRRSRPET…FGRGRGQAPQ (74 aa)) is disordered. Positions 97–128 (SRPETGRPRPKGLEGERPPRLPRGETDRDTYR) are enriched in basic and acidic residues. Residues 142–153 (AGAGAATEFQFR) show a composition bias toward low complexity. Gly residues predominate over residues 154-165 (GGFGRGRGQAPQ).

It belongs to the eukaryotic ribosomal protein eS10 family. In terms of assembly, component of the small ribosomal subunit.

The protein resides in the cytoplasm. Its subcellular location is the nucleus. It localises to the nucleolus. Functionally, component of the 40S ribosomal subunit. The ribosome is a large ribonucleoprotein complex responsible for the synthesis of proteins in the cell. This is Small ribosomal subunit protein eS10 (rps10) from Xenopus laevis (African clawed frog).